We begin with the raw amino-acid sequence, 416 residues long: MAALEKFLVEYKSAVEKKLAEYKCNTNTAIELKLVRFPEDLENDIRTFFPEYTHQLFGDDETAFGYKGLKILLYYIAGSLSTLFRVEYSSKVDENFDCVEADDVEGKIRQIIPPGFCTNTNDFLSLLEKETNFKPFGTLLHTYTVPSQTGGETFTFQIHKADMTCRGFREYHERLQTFLMWFIETASFIDVDDERWHYFLVFEKYNKDGATLFATVGYMTVYNYYVYPDKTRPRVSQMLILTPFQGQGHGAQLLETVHRYYISFPTVLDITAEDPSRSYLKLRDFVLVKFCQFLPSFSRERLLQGFSEDMAIQAQQMFKINKQHARRVYEILRLLVTDMSDAEQYRSYRLDIKRRLISPYKKKQRDLAKMKKCLRPEELTNQMNQIEISVQHEQLEERFQELVEDYRRVIERLAQE.

Alanine 2 carries the N-acetylalanine modification. Residues lysine 6 and lysine 12 each carry the N6-acetyllysine modification. An interaction with histone H4 N-terminus region spans residues 59 to 61 (DDE). At serine 187 the chain carries Phosphoserine. Residues 222–224 (YNY) form an interaction with histone H4 N-terminus region. Residues 238–240 (MLI) and 245–251 (QGQGHGA) contribute to the acetyl-CoA site. Catalysis depends on glutamate 273, which acts as the Proton donor/acceptor. Residue serine 340 is modified to Phosphoserine.

It belongs to the HAT1 family. As to quaternary structure, catalytic subunit of the type B histone acetyltransferase (HAT) complex, composed of RBBP7 and HAT1. Interacts with histones H4 and H2A. The interaction is dependent of the ability of RBBP7 to bind to the N-terminus of histones. Component of the histone H3.1 and H3.3 complexes. In terms of processing, phosphorylated by AMPK at Ser-187; phosphorylation increases HAT1 activity.

Its subcellular location is the nucleus matrix. It localises to the mitochondrion. It carries out the reaction L-lysyl-[protein] + acetyl-CoA = N(6)-acetyl-L-lysyl-[protein] + CoA + H(+). In terms of biological role, histone acetyltransferase that plays a role in different biological processes including cell cycle progression, glucose metabolism, histone production or DNA damage repair. Coordinates histone production and acetylation via H4 promoter binding. Acetylates histone H4 at 'Lys-5' (H4K5ac) and 'Lys-12' (H4K12ac) and, to a lesser extent, histone H2A at 'Lys-5' (H2AK5ac). Drives H4 production by chromatin binding to support chromatin replication and acetylation. Since transcription of H4 genes is tightly coupled to S-phase, plays an important role in S-phase entry and progression. Promotes homologous recombination in DNA repair by facilitating histone turnover and incorporation of acetylated H3.3 at sites of double-strand breaks. In addition, acetylates other substrates such as chromatin-related proteins. Also acetylates RSAD2 which mediates the interaction of ubiquitin ligase UBE4A with RSAD2 leading to RSAD2 ubiquitination and subsequent degradation. In Mus musculus (Mouse), this protein is Histone acetyltransferase type B catalytic subunit (Hat1).